Here is a 341-residue protein sequence, read N- to C-terminus: Trimethylamine N-oxide transport system ATP-binding protein TmoW (341 aa).

One can recognise an ABC transporter domain in the interval 6–265 (IKCESVYKIF…PATEYVRKFT (260 aa)). 61–68 (GLSGSGKS) serves as a coordination point for ATP.

Belongs to the ABC transporter superfamily. As to quaternary structure, the complex is probably composed of two ATP-binding proteins (TmoW), two transmembrane proteins (TmoV) and a solute-binding protein (TmoX).

It is found in the cell inner membrane. It catalyses the reaction a quaternary ammonium(out) + ATP + H2O = a quaternary ammonium(in) + ADP + phosphate + H(+). Its function is as follows. Part of the ABC transporter complex TmoXWV involved in trimethylamine N-oxide (TMAO) import. Responsible for energy coupling to the transport system. The protein is Trimethylamine N-oxide transport system ATP-binding protein TmoW of Pelagibacter ubique (strain HTCC1062).